The chain runs to 429 residues: Adenylosuccinate synthetase (429 aa).

GTP-binding positions include 12–18 and 40–42; these read GDEGKGK and GHT. Aspartate 13 acts as the Proton acceptor in catalysis. Residues aspartate 13 and glycine 40 each contribute to the Mg(2+) site. Residues 13–16, 38–41, threonine 128, arginine 142, glutamine 224, threonine 239, and arginine 303 contribute to the IMP site; these read DEGK and NAGH. Histidine 41 acts as the Proton donor in catalysis. Position 299–305 (299–305) interacts with substrate; that stretch reads VTTGRPR. GTP is bound by residues arginine 305, 331–333, and 413–415; these read LLD and SVG.

Belongs to the adenylosuccinate synthetase family. In terms of assembly, homodimer. Requires Mg(2+) as cofactor.

It localises to the cytoplasm. It carries out the reaction IMP + L-aspartate + GTP = N(6)-(1,2-dicarboxyethyl)-AMP + GDP + phosphate + 2 H(+). It functions in the pathway purine metabolism; AMP biosynthesis via de novo pathway; AMP from IMP: step 1/2. Plays an important role in the de novo pathway of purine nucleotide biosynthesis. Catalyzes the first committed step in the biosynthesis of AMP from IMP. In Clostridioides difficile (strain 630) (Peptoclostridium difficile), this protein is Adenylosuccinate synthetase.